The chain runs to 447 residues: Putative vacuolar cation/proton exchanger 4 (447 aa).

Residues 1–29 (MDKSEMDKINGTNPESTDQAPSLASRPDE) form a disordered region. The Cytoplasmic segment spans residues 1 to 65 (MDKSEMDKIN…VNWGVFGSMK (65 aa)). Over residues 10 to 22 (NGTNPESTDQAPS) the composition is skewed to polar residues. Residues 66 to 86 (IVFLKSKLNVLIPCGFLAIFL) form a helical membrane-spanning segment. Residues 87–93 (NYMTQRY) are Extracellular-facing. A helical transmembrane segment spans residues 94-114 (GWVFPLSMLGIIPLAERLGFA). Residues 115 to 122 (TDWQISCE) are Cytoplasmic-facing. The chain crosses the membrane as a helical span at residues 123-143 (VGRLLNSAFGNATELIISIHA). Residues 132–167 (GNATELIISIHALSRGKLHVVQQCLLGSILSNLLLV) form a cation selection region. Topologically, residues 144–159 (LSRGKLHVVQQCLLGS) are extracellular. Residues 160–180 (ILSNLLLVLGSAFFSGGLACG) form a helical membrane-spanning segment. At 181–190 (KTMQTFSKAD) the chain is on the cytoplasmic side. A helical transmembrane segment spans residues 191 to 211 (AVVNSGLLLMAVMGLLIPAAL). The Extracellular portion of the chain corresponds to 212 to 224 (HYTHSEAQFGKSE). The helical transmembrane segment at 225–245 (LALSRFSSCIMLVAYASYLYF) threads the bilayer. The Cytoplasmic portion of the chain corresponds to 246 to 286 (QLSNNRRRNEANVYPCMPLIKRRIQDDVDGNDDEVPEISKR). The helical transmembrane segment at 287 to 307 (EAISWIAIFIAWISMLSYYLV) threads the bilayer. The Extracellular segment spans residues 308 to 318 (DAIDGASKAWN). The helical transmembrane segment at 319–339 (IPVAFISVVLLPVVGNSAGHA) threads the bilayer. The tract at residues 333–368 (GNSAGHANAVMFAVKDKLDISLGVAIGSSIQISMFG) is cation selection. Over 340 to 353 (NAVMFAVKDKLDIS) the chain is Cytoplasmic. The helical transmembrane segment at 354–374 (LGVAIGSSIQISMFGIPFCVV) threads the bilayer. At 375–384 (MGWMMGKPMD) the chain is on the extracellular side. Residues 385 to 405 (LNFHLFETASLLTTVLVVAFL) form a helical membrane-spanning segment. At 406–413 (LQDGTSNC) the chain is on the cytoplasmic side. The helical transmembrane segment at 414–434 (VKGLMLFLCYLIVAASFYVHA) threads the bilayer. Residues 435-447 (DPNSKASEKPPQN) lie on the Extracellular side of the membrane.

It belongs to the Ca(2+):cation antiporter (CaCA) (TC 2.A.19) family. Cation/proton exchanger (CAX) subfamily.

The protein localises to the vacuole membrane. In terms of biological role, vacuolar cation/proton exchanger (CAX). Translocates Ca(2+) and other metal ions into vacuoles using the proton gradient formed by H(+)-ATPase and H(+)-pyrophosphatase. The protein is Putative vacuolar cation/proton exchanger 4 of Oryza sativa subsp. japonica (Rice).